The following is an 89-amino-acid chain: Small ribosomal subunit protein uS15 (89 aa).

It belongs to the universal ribosomal protein uS15 family. In terms of assembly, part of the 30S ribosomal subunit. Forms a bridge to the 50S subunit in the 70S ribosome, contacting the 23S rRNA.

Its function is as follows. One of the primary rRNA binding proteins, it binds directly to 16S rRNA where it helps nucleate assembly of the platform of the 30S subunit by binding and bridging several RNA helices of the 16S rRNA. Forms an intersubunit bridge (bridge B4) with the 23S rRNA of the 50S subunit in the ribosome. This is Small ribosomal subunit protein uS15 from Escherichia coli O139:H28 (strain E24377A / ETEC).